A 129-amino-acid chain; its full sequence is Small ribosomal subunit protein uS8 (129 aa).

Belongs to the universal ribosomal protein uS8 family. In terms of assembly, part of the 30S ribosomal subunit. Contacts proteins S5 and S12.

Functionally, one of the primary rRNA binding proteins, it binds directly to 16S rRNA central domain where it helps coordinate assembly of the platform of the 30S subunit. The sequence is that of Small ribosomal subunit protein uS8 from Mycoplasma capricolum subsp. capricolum (strain California kid / ATCC 27343 / NCTC 10154).